A 507-amino-acid polypeptide reads, in one-letter code: UDP-N-acetylhexosamine pyrophosphorylase-like protein 1 (507 aa).

The Substrate binding motif lies at 111–114; that stretch reads LAGG. Residues 111 to 114, Lys-125, Gln-199, and Gly-225 each bind UTP; that span reads LAGG. Substrate is bound at residue Asn-226. Position 256 (Asp-256) interacts with UTP. The Substrate binding motif lies at 306-307; sequence EY. A UTP-binding site is contributed by Lys-380. Lys-410 contacts substrate.

This sequence belongs to the UDPGP type 1 family.

This is UDP-N-acetylhexosamine pyrophosphorylase-like protein 1 (Uap1l1) from Mus musculus (Mouse).